Consider the following 579-residue polypeptide: uncharacterized protein (579 aa).

A disordered region spans residues 1 to 100 (MSGRRRNHPG…APPCGPYPGE (100 aa)). Positions 80 to 90 (GQQQSEPQHNS) are enriched in polar residues. 11 helical membrane passes run 148 to 168 (FAVDSAMAVALANTLFFAAAS), 175 to 195 (VALYLLITIAPFAVIAPLIGP), 206 to 226 (VALATSFVLRTGLATLLIMNY), 228 to 248 (GATGSYPSMVLYPCALAMMVL), 279 to 299 (VFGLLGGTIAGGAIAAGVEFV), 303 to 323 (LFKLPGALFVVAAITISGALL), 378 to 398 (LWGNCTIKVMVGFLFLYPAFV), 407 to 427 (WVQLGMLGLIGTAAAIGNFAG), 448 to 468 (IAVTVLALAASVAGNLLMTTI), 504 to 524 (SESTLQLAWVLGGALGVMVYT), and 526 to 546 (LWVGFTAVSALLILGLAQTVV).

It to M.tuberculosis Rv0876c.

It is found in the cell membrane. This is an uncharacterized protein from Mycobacterium leprae (strain TN).